Consider the following 478-residue polypeptide: MAEAATPKIGSVGRVTQVIGAVVDVAFEGELPKILNALETTNNGVRLVLEVAQHLGENEVRTIAMDSSEGLVRGQEVSDTGAPIMVPVGNETLGRIMNVIGEPVDEAGPLVTAHKRAIHQDAPSYVEQSTEAQILVTGIKVVDLLAPYARGGKIGLFGGAGVGKTVLIMELINNVAKAHGGYSVFAGVGERTREGNDLYHEMIESNVNKHGGGEGSKAALVYGQMNEPPGARARVALTGLTVAEHFRDQGQDVLFFVDNIFRFTQAGSEVSALLGRIPSAVGYQPTLATDMGQMQERITTTTTGSITSVQAIYVPADDLTDPAPATSFAHLDATTVLSRSIAEKGIYPAVDPLDSTSRMLDPMVVGEEHYEVARKVQSTLQRYKALQDIIAILGMDELSEEDKIAVARARKIERFLSQPFFVAEVFTGSPGKLVALEDTIKGFKGLVNGEYDHLPEAAFYMVGSMEEAIEKAKKLAAA.

Residue 158–165 (GGAGVGKT) participates in ATP binding.

Belongs to the ATPase alpha/beta chains family. In terms of assembly, F-type ATPases have 2 components, CF(1) - the catalytic core - and CF(0) - the membrane proton channel. CF(1) has five subunits: alpha(3), beta(3), gamma(1), delta(1), epsilon(1). CF(0) has three main subunits: a(1), b(2) and c(9-12). The alpha and beta chains form an alternating ring which encloses part of the gamma chain. CF(1) is attached to CF(0) by a central stalk formed by the gamma and epsilon chains, while a peripheral stalk is formed by the delta and b chains.

The protein resides in the cell inner membrane. It catalyses the reaction ATP + H2O + 4 H(+)(in) = ADP + phosphate + 5 H(+)(out). Functionally, produces ATP from ADP in the presence of a proton gradient across the membrane. The catalytic sites are hosted primarily by the beta subunits. This Rhizobium leguminosarum bv. trifolii (strain WSM2304) protein is ATP synthase subunit beta.